Reading from the N-terminus, the 486-residue chain is Maternal protein exuperantia (486 aa).

Disordered regions lie at residues 202–233 (NARVDNDNEADSNSSSADKHVKNGLQKERDEF) and 386–477 (STIR…ISLP). A compositionally biased stretch (basic and acidic residues) spans 218 to 233 (ADKHVKNGLQKERDEF). Positions 387-397 (TIRRRNKRNTP) are enriched in basic residues. Polar residues-rich tracts occupy residues 420-437 (KSQSVSSVPDSTTKTPSP) and 464-476 (SALNNTAPASISL).

Its function is as follows. Ensures the proper localization of the mRNA of the bicoid gene to the anterior regions of the oocyte thus playing a fundamental role in the establishment of the polarity of the oocyte. May bind the bcd mRNA. The chain is Maternal protein exuperantia (exu) from Drosophila virilis (Fruit fly).